We begin with the raw amino-acid sequence, 285 residues long: Anamorsin homolog 1 (285 aa).

The tract at residues 1–150 (MEATVLLVTD…QKPTWETGSS (150 aa)) is N-terminal SAM-like domain. The linker stretch occupies residues 150–195 (SFSLKKKSVQKQESLPKPGALSVKPEMNVDLEDLIDEESLLSEEDL). [2Fe-2S] cluster contacts are provided by Cys-206, Cys-215, Cys-218, and Cys-220. The interval 206–220 (CEVSTKRKACKNCTC) is fe-S binding site A. [4Fe-4S] cluster contacts are provided by Cys-246, Cys-249, Cys-257, and Cys-260. 2 consecutive short sequence motifs (cx2C motif) follow at residues 246-249 (CGNC) and 257-260 (CSSC). Positions 246-260 (CGNCGLGDAFRCSSC) are fe-S binding site B.

This sequence belongs to the anamorsin family. Monomer. [2Fe-2S] cluster is required as a cofactor. It depends on [4Fe-4S] cluster as a cofactor.

The protein localises to the cytoplasm. It is found in the mitochondrion intermembrane space. Component of the cytosolic iron-sulfur (Fe-S) protein assembly (CIA) machinery. Required for the maturation of extramitochondrial Fe-S proteins. Part of an electron transfer chain functioning in an early step of cytosolic Fe-S biogenesis, facilitating the de novo assembly of a [4Fe-4S] cluster on the cytosolic Fe-S scaffold complex. Electrons are transferred from NADPH via a FAD- and FMN-containing diflavin oxidoreductase. Together with the diflavin oxidoreductase, also required for the assembly of the diferric tyrosyl radical cofactor of ribonucleotide reductase (RNR), probably by providing electrons for reduction during radical cofactor maturation in the catalytic small subunit. This chain is Anamorsin homolog 1, found in Picea sitchensis (Sitka spruce).